Here is a 217-residue protein sequence, read N- to C-terminus: Nuclear transcription factor Y subunit C-3 (217 aa).

Residues 1-28 are compositionally biased toward polar residues; the sequence is MDQQGQSSAMNYGSNPYQTNAMTTTPTG. Disordered stretches follow at residues 1–29 and 198–217; these read MDQQGQSSAMNYGSNPYQTNAMTTTPTGS and PYMGQPMWQQPGPEQQDPDN.

This sequence belongs to the NFYC/HAP5 subunit family. As to quaternary structure, heterotrimeric transcription factor composed of three components, NF-YA, NF-YB and NF-YC. NF-YB and NF-YC must interact and dimerize for NF-YA association and DNA binding. Ubiquitous.

Its subcellular location is the nucleus. Its function is as follows. Stimulates the transcription of various genes by recognizing and binding to a CCAAT motif in promoters. The sequence is that of Nuclear transcription factor Y subunit C-3 (NFYC3) from Arabidopsis thaliana (Mouse-ear cress).